A 253-amino-acid chain; its full sequence is tRNA pseudouridine synthase A (253 aa).

Asp-53 functions as the Nucleophile in the catalytic mechanism. Position 112 (Tyr-112) interacts with substrate.

Belongs to the tRNA pseudouridine synthase TruA family. Homodimer.

It carries out the reaction uridine(38/39/40) in tRNA = pseudouridine(38/39/40) in tRNA. Functionally, formation of pseudouridine at positions 38, 39 and 40 in the anticodon stem and loop of transfer RNAs. The sequence is that of tRNA pseudouridine synthase A from Lactococcus lactis subsp. cremoris (strain MG1363).